The primary structure comprises 1014 residues: SUMO-specific isopeptidase USPL1 (1014 aa).

2 disordered regions span residues 137–158 (TFTD…EEQP) and 275–318 (EEKP…VSDE). The span at 275–289 (EEKPVSLVHTEDQHL) shows a compositional bias: basic and acidic residues. Residues 355–636 (LFWKNEENMC…EFHILFWETD (282 aa)) enclose the USP domain. Cysteine 364 (nucleophile) is an active-site residue. Residues 364–631 (CWLDAMLVML…PFPSSEFHIL (268 aa)) are SUMO-binding. Residue histidine 592 is the Proton acceptor of the active site. 2 disordered regions span residues 794–823 (HPSF…YDKH) and 844–867 (NSQP…AGQE). Positions 802–815 (IRPPPPLPPAPKPK) are enriched in pro residues.

Belongs to the peptidase C19 family.

Its subcellular location is the nucleus. It is found in the cajal body. Functionally, SUMO-specific isopeptidase involved in protein desumoylation. Specifically binds SUMO proteins with a higher affinity for sumo2 and sumo3 which it cleaves more efficiently. Also able to process full-length SUMO proteins to their mature forms. Plays a key role in RNA polymerase-II-mediated snRNA transcription in the Cajal bodies. Is a component of complexes that can bind to U snRNA genes. The polypeptide is SUMO-specific isopeptidase USPL1 (uspl1) (Danio rerio (Zebrafish)).